Reading from the N-terminus, the 339-residue chain is Heat-inducible transcription repressor HrcA (339 aa).

This sequence belongs to the HrcA family.

Functionally, negative regulator of class I heat shock genes (grpE-dnaK-dnaJ and groELS operons). Prevents heat-shock induction of these operons. This Paraburkholderia phytofirmans (strain DSM 17436 / LMG 22146 / PsJN) (Burkholderia phytofirmans) protein is Heat-inducible transcription repressor HrcA.